The following is a 365-amino-acid chain: MSTAVTITAPSVKHILLDSLVVMKIVKHVDSELHAGISEVSGDACAGVLTGLVFLEDSRLEITNCFPTVRNEPVMDDDANAAQQYEEQKQHEMLDMLRKFRTMNIDYEIVGFYQSHQFGAGFSHDLVESMFDYQAMGPENVVLIYDPIKTRQGQLSLRAWRLSTAALDLASKNDWRPELVKAAGLTYQNMFEELPIIIKSSYLNNVLMSELSLAKSCSSDKYSTRHFDLGSKKSLEKSVRAMMANVDELNKSIQSLTKYTIDKQRHDNMVFSLTQKRQQENESRVARGDPTIPMDDIKRIKAPQLQTRNGLLDELLASFDTNALADFSKTVTSENITKMFIAEAVAEEKVAGTKDRTLSSVSSTR.

The region spanning 15-166 (ILLDSLVVMK…LRAWRLSTAA (152 aa)) is the MPN domain.

The protein belongs to the eIF-3 subunit H family. As to quaternary structure, component of the eukaryotic translation initiation factor 3 (eIF-3) complex.

The protein resides in the cytoplasm. Its function is as follows. Component of the eukaryotic translation initiation factor 3 (eIF-3) complex, which is involved in protein synthesis of a specialized repertoire of mRNAs and, together with other initiation factors, stimulates binding of mRNA and methionyl-tRNAi to the 40S ribosome. The eIF-3 complex specifically targets and initiates translation of a subset of mRNAs involved in cell proliferation. The protein is Eukaryotic translation initiation factor 3 subunit H of Caenorhabditis elegans.